The sequence spans 115 residues: Large ribosomal subunit protein bL20 (115 aa).

The protein belongs to the bacterial ribosomal protein bL20 family.

Its function is as follows. Binds directly to 23S ribosomal RNA and is necessary for the in vitro assembly process of the 50S ribosomal subunit. It is not involved in the protein synthesizing functions of that subunit. In Myxococcus xanthus (strain DK1622), this protein is Large ribosomal subunit protein bL20.